Consider the following 175-residue polypeptide: Translation initiation factor IF-3 (175 aa).

Belongs to the IF-3 family. As to quaternary structure, monomer.

The protein localises to the cytoplasm. Its function is as follows. IF-3 binds to the 30S ribosomal subunit and shifts the equilibrium between 70S ribosomes and their 50S and 30S subunits in favor of the free subunits, thus enhancing the availability of 30S subunits on which protein synthesis initiation begins. The polypeptide is Translation initiation factor IF-3 (Chromobacterium violaceum (strain ATCC 12472 / DSM 30191 / JCM 1249 / CCUG 213 / NBRC 12614 / NCIMB 9131 / NCTC 9757 / MK)).